The primary structure comprises 214 residues: ATP-dependent Clp protease proteolytic subunit (214 aa).

Residue serine 114 is the Nucleophile of the active site. Histidine 139 is a catalytic residue.

Belongs to the peptidase S14 family. Fourteen ClpP subunits assemble into 2 heptameric rings which stack back to back to give a disk-like structure with a central cavity, resembling the structure of eukaryotic proteasomes.

The protein localises to the cytoplasm. The catalysed reaction is Hydrolysis of proteins to small peptides in the presence of ATP and magnesium. alpha-casein is the usual test substrate. In the absence of ATP, only oligopeptides shorter than five residues are hydrolyzed (such as succinyl-Leu-Tyr-|-NHMec, and Leu-Tyr-Leu-|-Tyr-Trp, in which cleavage of the -Tyr-|-Leu- and -Tyr-|-Trp bonds also occurs).. Functionally, cleaves peptides in various proteins in a process that requires ATP hydrolysis. Has a chymotrypsin-like activity. Plays a major role in the degradation of misfolded proteins. This Nitrosomonas europaea (strain ATCC 19718 / CIP 103999 / KCTC 2705 / NBRC 14298) protein is ATP-dependent Clp protease proteolytic subunit.